We begin with the raw amino-acid sequence, 202 residues long: Dephospho-CoA kinase (202 aa).

Residues 3 to 200 (TIGLTGGIGS…QRYLTLAANR (198 aa)) form the DPCK domain. Position 11-16 (11-16 (GSGKSA)) interacts with ATP.

Belongs to the CoaE family.

It is found in the cytoplasm. It catalyses the reaction 3'-dephospho-CoA + ATP = ADP + CoA + H(+). The protein operates within cofactor biosynthesis; coenzyme A biosynthesis; CoA from (R)-pantothenate: step 5/5. Its function is as follows. Catalyzes the phosphorylation of the 3'-hydroxyl group of dephosphocoenzyme A to form coenzyme A. The sequence is that of Dephospho-CoA kinase from Thiobacillus denitrificans (strain ATCC 25259 / T1).